The primary structure comprises 166 residues: UPF0304 protein VS_1049 (166 aa).

Belongs to the UPF0304 family.

The sequence is that of UPF0304 protein VS_1049 from Vibrio atlanticus (strain LGP32) (Vibrio splendidus (strain Mel32)).